The chain runs to 615 residues: 1-deoxy-D-xylulose-5-phosphate synthase (615 aa).

Thiamine diphosphate-binding positions include His-76 and Gly-117–Ser-119. Asp-148 serves as a coordination point for Mg(2+). Residues Gly-149–Ala-150, Asn-177, Tyr-284, and Glu-365 contribute to the thiamine diphosphate site. Asn-177 is a Mg(2+) binding site.

The protein belongs to the transketolase family. DXPS subfamily. Homodimer. Mg(2+) is required as a cofactor. The cofactor is thiamine diphosphate.

The catalysed reaction is D-glyceraldehyde 3-phosphate + pyruvate + H(+) = 1-deoxy-D-xylulose 5-phosphate + CO2. The protein operates within metabolic intermediate biosynthesis; 1-deoxy-D-xylulose 5-phosphate biosynthesis; 1-deoxy-D-xylulose 5-phosphate from D-glyceraldehyde 3-phosphate and pyruvate: step 1/1. Its function is as follows. Catalyzes the acyloin condensation reaction between C atoms 2 and 3 of pyruvate and glyceraldehyde 3-phosphate to yield 1-deoxy-D-xylulose-5-phosphate (DXP). This Francisella tularensis subsp. holarctica (strain FTNF002-00 / FTA) protein is 1-deoxy-D-xylulose-5-phosphate synthase.